A 162-amino-acid polypeptide reads, in one-letter code: Peptidyl-prolyl cis-trans isomerase-like 1 (162 aa).

One can recognise a PPIase cyclophilin-type domain in the interval 1 to 155; it reads MATDVAFDTS…DGVKILRARI (155 aa).

Belongs to the cyclophilin-type PPIase family. PPIL1 subfamily.

It carries out the reaction [protein]-peptidylproline (omega=180) = [protein]-peptidylproline (omega=0). Its function is as follows. PPIases accelerate the folding of proteins. It catalyzes the cis-trans isomerization of proline imidic peptide bonds in oligopeptides. In Aspergillus niger, this protein is Peptidyl-prolyl cis-trans isomerase-like 1 (cypC).